A 531-amino-acid polypeptide reads, in one-letter code: Putative aldehyde dehydrogenase family 7 member A1 homolog (531 aa).

NAD(+) is bound at residue 264 to 269 (GSSEIG). The active-site Proton acceptor is E286. The active-site Nucleophile is the C320.

It belongs to the aldehyde dehydrogenase family. Homotetramer.

It carries out the reaction an aldehyde + NAD(+) + H2O = a carboxylate + NADH + 2 H(+). The sequence is that of Putative aldehyde dehydrogenase family 7 member A1 homolog (alh-9) from Caenorhabditis elegans.